Consider the following 429-residue polypeptide: Sex determination protein fox-1 (429 aa).

Residues Ala-156 to Asp-180 are compositionally biased toward low complexity. Residues Ala-156 to Ser-188 are disordered. Residues Lys-183–Ala-259 form the RRM domain.

As to quaternary structure, interacts with sup-12. In terms of tissue distribution, in males and hermaphrodites expressed in a subset of cells in the head and tail. Expressed in the pharynx, intestine and in muscles from the vulva and body wall.

It is found in the nucleus. In terms of biological role, RNA-binding protein that regulates tissue-specific alternative splicing events by binding to 5'-UGCAUG-3' and 5'-GCACG-3' elements. Also binds to poly(A), poly(G), poly(C), or poly(U) stretches of RNA. Plays a role in the sex determination pathway and X chromosome dosage compensation, and together with sex-1 is involved in making the distinction between one and two X-chromosomes. Binds to 5'-GCAUG-3' and 5'-GCACG-3' elements in intron 6 of the pre-mRNA of the sex-determining factor xol-1 to promote its alternative splicing and together with sex-1 negatively regulates the expression of xol-1 to promote hermaphrodite development. Negatively regulates the expression of the active isoform of xol-1 (isoform b) by promoting intron 6 retention and the deletion of exon 7 coding sequences in hermaphrodite embryos. Furthermore, binding to the pre-mRNA of xol-1 can also direct the use of an alternative 3' splice site enabling the xol-1 transcript to be trans-spliced to unrelated genes on chromosome 2, which also leads to xol-1 exon 7 deletion. Does not seem to regulate the retention of introns 1 to 5 of xol-1 pre-mRNA. Plays a role in the association of the dosage compensation complex proteins dpy-27 and sdc-3 with the hermaphrodite X chromosomes. Binds to 5'-UGCAUG-3' elements in intron 7 of the pre-mRNA of unc-32 to promote its alternative splicing in neuronal tissues. Binds to 5'-UGCAUG-3' elements in intron 4 of the pre-mRNA of egl-15 to promote its alternative splicing in body wall muscle tissues. Promotes binding of RNA-binding protein sup-12 to target RNA. Plays a role in male mating behavior. This is Sex determination protein fox-1 from Caenorhabditis elegans.